A 329-amino-acid chain; its full sequence is Probable quinone oxidoreductase (329 aa).

S191 carries the post-translational modification Phosphoserine.

The protein belongs to the zinc-containing alcohol dehydrogenase family. Quinone oxidoreductase subfamily.

Its subcellular location is the cytoplasm. The protein localises to the nucleus. It catalyses the reaction 2 a quinone + NADPH + H(+) = 2 a 1,4-benzosemiquinone + NADP(+). The protein is Probable quinone oxidoreductase (zta1) of Schizosaccharomyces pombe (strain 972 / ATCC 24843) (Fission yeast).